The chain runs to 443 residues: Xaa-Pro dipeptidase (443 aa).

D244, D255, H336, E381, and E420 together coordinate Mn(2+).

The protein belongs to the peptidase M24B family. Bacterial-type prolidase subfamily. The cofactor is Mn(2+).

The catalysed reaction is Xaa-L-Pro dipeptide + H2O = an L-alpha-amino acid + L-proline. In terms of biological role, splits dipeptides with a prolyl residue in the C-terminal position. This chain is Xaa-Pro dipeptidase, found in Stenotrophomonas maltophilia (strain R551-3).